The following is a 995-amino-acid chain: Epididymis-specific alpha-mannosidase (995 aa).

Positions Met1–Ala21 are cleaved as a signal peptide. Residues His36, Asp38, and Asp151 each contribute to the Zn(2+) site. The active-site Nucleophile is the Asp151. The N-linked (GlcNAc...) asparagine glycan is linked to Asn285. His411 contributes to the Zn(2+) binding site. Asn593, Asn625, Asn657, Asn733, Asn793, Asn875, and Asn977 each carry an N-linked (GlcNAc...) asparagine glycan. The segment at Thr956 to Asn977 is disordered.

It belongs to the glycosyl hydrolase 38 family. The cofactor is Zn(2+). In terms of processing, processed into a 27 kDa fragment localized on the equatorial segment and the apical rim of the head of mature sperm. Specific to the caput and corpus of the epididymis.

The protein localises to the secreted. It catalyses the reaction Hydrolysis of terminal, non-reducing alpha-D-mannose residues in alpha-D-mannosides.. Functionally, can digest both p-nitro-phenyl-alpha-D-mannoside and high mannose oligosaccharide (Man(8)-GlcNAc(2)). May be involved in sperm maturation. Has a possible role in specific sperm-egg interaction since sperm surface mannosidase acts like a receptor for mannose-containing oligosaccharides located on the zona pellucida. The polypeptide is Epididymis-specific alpha-mannosidase (MAN2B2) (Sus scrofa (Pig)).